Reading from the N-terminus, the 230-residue chain is Large ribosomal subunit protein uL1 (230 aa).

Belongs to the universal ribosomal protein uL1 family. Part of the 50S ribosomal subunit.

Functionally, binds directly to 23S rRNA. The L1 stalk is quite mobile in the ribosome, and is involved in E site tRNA release. Its function is as follows. Protein L1 is also a translational repressor protein, it controls the translation of the L11 operon by binding to its mRNA. In Onion yellows phytoplasma (strain OY-M), this protein is Large ribosomal subunit protein uL1.